We begin with the raw amino-acid sequence, 754 residues long: 5-methyltetrahydropteroyltriglutamate--homocysteine methyltransferase (754 aa).

5-methyltetrahydropteroyltri-L-glutamate contacts are provided by residues 15–18 (RELK) and Lys114. Residues 430–432 (IGS) and Glu483 contribute to the L-homocysteine site. L-methionine contacts are provided by residues 430–432 (IGS) and Glu483. Residues 514–515 (RC) and Trp560 contribute to the 5-methyltetrahydropteroyltri-L-glutamate site. Residue Asp598 coordinates L-homocysteine. Asp598 is a binding site for L-methionine. Glu604 is a binding site for 5-methyltetrahydropteroyltri-L-glutamate. His641, Cys643, and Glu665 together coordinate Zn(2+). His694 acts as the Proton donor in catalysis. Residue Cys726 participates in Zn(2+) binding.

It belongs to the vitamin-B12 independent methionine synthase family. Zn(2+) serves as cofactor.

The catalysed reaction is 5-methyltetrahydropteroyltri-L-glutamate + L-homocysteine = tetrahydropteroyltri-L-glutamate + L-methionine. It participates in amino-acid biosynthesis; L-methionine biosynthesis via de novo pathway; L-methionine from L-homocysteine (MetE route): step 1/1. Functionally, catalyzes the transfer of a methyl group from 5-methyltetrahydrofolate to homocysteine resulting in methionine formation. This chain is 5-methyltetrahydropteroyltriglutamate--homocysteine methyltransferase, found in Campylobacter jejuni subsp. doylei (strain ATCC BAA-1458 / RM4099 / 269.97).